We begin with the raw amino-acid sequence, 223 residues long: Ribose-5-phosphate isomerase A (223 aa).

Substrate is bound by residues 32–35 (TGST), 85–88 (DGAD), and 98–101 (KGGG). Residue glutamate 107 is the Proton acceptor of the active site. Lysine 125 serves as a coordination point for substrate.

It belongs to the ribose 5-phosphate isomerase family. Homodimer.

It carries out the reaction aldehydo-D-ribose 5-phosphate = D-ribulose 5-phosphate. Its pathway is carbohydrate degradation; pentose phosphate pathway; D-ribose 5-phosphate from D-ribulose 5-phosphate (non-oxidative stage): step 1/1. Catalyzes the reversible conversion of ribose-5-phosphate to ribulose 5-phosphate. The sequence is that of Ribose-5-phosphate isomerase A from Pseudomonas fluorescens (strain ATCC BAA-477 / NRRL B-23932 / Pf-5).